The chain runs to 463 residues: MVVQYLLFSNDKNVDPTNLVLRQDFLHQKCLLISVSNSSHIFHEMLSFRNVRKDDFIIEFFSENNVCSLDNCIAKKIHYLSDINTFDMLLSLDGEYESLIKWFISVNYFEALQNYQHLVKSLSLKTDLMFYAVSKNVSIDVINFLIDMDCKCTIDSITRAIAEKKLDIAKIIIDHNPSENIIHESLYCLSYEKQKDLFKYVLENYKIDSRYYHKSLIYWMINKDEEIMCDLLCRIDIKEFSKEKNISSYVIQSNSLNVVKTFVEHGLQFNPDIYLWVNGNSESENIVRYIIELGIDYRPHIDRLLKICITSGTFSHLEYLINLGVSQENINEAFLTAVSEDKFELIKYLIYMGADINYKNTIAASYTDNIDVLKYLIEKGADITTGGSNDVINHAIGSHQSDFCRCLLENGATITLDDRDELMVIYRELTNGCSYEDDDYEDLDQLTNSDLRNLIHEEIMNSC.

ANK repeat units follow at residues 124 to 154, 156 to 181, 242 to 271, 273 to 299, 300 to 328, 329 to 355, 356 to 385, and 387 to 416; these read LKTD…KCTI, SITR…SENI, KEKN…QFNP, IYLW…DYRP, HIDR…VSQE, NINE…MGAD, INYK…DITT, and GSND…TITL.

This chain is Putative ankyrin repeat protein R579, found in Acanthamoeba polyphaga (Amoeba).